The chain runs to 479 residues: Zinc finger and SCAN domain-containing protein 26 (479 aa).

A Glycyl lysine isopeptide (Lys-Gly) (interchain with G-Cter in SUMO2) cross-link involves residue lysine 17. One can recognise an SCAN box domain in the interval cysteine 51 to leucine 133. The interval threonine 155–asparagine 187 is disordered. Residues glutamine 174–asparagine 187 show a composition bias toward basic and acidic residues. A C2H2-type 1; degenerate zinc finger spans residues cysteine 232–histidine 254. C2H2-type zinc fingers lie at residues histidine 283–histidine 305, tyrosine 311–histidine 333, tyrosine 339–histidine 361, cysteine 367–histidine 389, histidine 395–histidine 417, phenylalanine 423–histidine 445, and tyrosine 451–histidine 473.

It is found in the nucleus. Functionally, may be involved in transcriptional regulation. This chain is Zinc finger and SCAN domain-containing protein 26 (ZSCAN26), found in Bos taurus (Bovine).